The following is a 92-amino-acid chain: UPF0237 protein MA_3235 (92 aa).

An ACT domain is found at 7 to 81; sequence IITVIGSDRV…KSLGVEVKVQ (75 aa).

It belongs to the UPF0237 family.

The chain is UPF0237 protein MA_3235 from Methanosarcina acetivorans (strain ATCC 35395 / DSM 2834 / JCM 12185 / C2A).